We begin with the raw amino-acid sequence, 179 residues long: Pyridoxal 5'-phosphate synthase subunit PdxT (179 aa).

An L-glutamine-binding site is contributed by 48 to 50 (GES). The Nucleophile role is filled by C79. L-glutamine-binding positions include R101 and 127-128 (IR). Catalysis depends on charge relay system residues H163 and E165.

This sequence belongs to the glutaminase PdxT/SNO family. As to quaternary structure, in the presence of PdxS, forms a dodecamer of heterodimers. Only shows activity in the heterodimer.

It carries out the reaction aldehydo-D-ribose 5-phosphate + D-glyceraldehyde 3-phosphate + L-glutamine = pyridoxal 5'-phosphate + L-glutamate + phosphate + 3 H2O + H(+). The catalysed reaction is L-glutamine + H2O = L-glutamate + NH4(+). It functions in the pathway cofactor biosynthesis; pyridoxal 5'-phosphate biosynthesis. In terms of biological role, catalyzes the hydrolysis of glutamine to glutamate and ammonia as part of the biosynthesis of pyridoxal 5'-phosphate. The resulting ammonia molecule is channeled to the active site of PdxS. This Francisella tularensis subsp. novicida (strain U112) protein is Pyridoxal 5'-phosphate synthase subunit PdxT.